Consider the following 42-residue polypeptide: GITPDCTFNEKDIELHVYSRDKRNGIILKKEILKNYDLFKES.

The protein belongs to the AB hydrolase superfamily. Lipase family. In terms of processing, contains six disulfide bonds. Expressed by the venom gland.

It is found in the secreted. It carries out the reaction a 1,2-diacyl-sn-glycero-3-phosphocholine + H2O = a 2-acyl-sn-glycero-3-phosphocholine + a fatty acid + H(+). Its function is as follows. Catalyzes the hydrolysis of phosphatidylcholine with phospholipase A1 activity. May act as an allergen and induce hemolytic activity. The polypeptide is Phospholipase A1 (Polistes gallicus (Paper wasp)).